The following is a 483-amino-acid chain: Zinc metalloproteinase/disintegrin (483 aa).

Residues 1–20 (MIQVLLVTLCLAAFPYQGSS) form the signal peptide. Residues 21 to 190 (IILESGNVND…KKASQLNLTP (170 aa)) constitute a propeptide that is removed on maturation. Positions 198–394 (RYIELVVVAD…HNPQCMLNEP (197 aa)) constitute a Peptidase M12B domain. Ca(2+) contacts are provided by glutamate 201 and aspartate 285. Intrachain disulfides connect cysteine 309/cysteine 389, cysteine 349/cysteine 373, and cysteine 351/cysteine 356. Zn(2+) is bound at residue histidine 334. Residue glutamate 335 is part of the active site. The Zn(2+) site is built by histidine 338 and histidine 344. Ca(2+)-binding residues include cysteine 389 and asparagine 392. The propeptide occupies 395 to 418 (LRTDIVSTPVSGNELLETGEESDF). Residues 402–483 (TPVSGNELLE…AGCPRNPFHA (82 aa)) enclose the Disintegrin domain. Disulfide bonds link cysteine 425-cysteine 448, cysteine 439-cysteine 445, cysteine 444-cysteine 469, and cysteine 457-cysteine 476. The Cell attachment site motif lies at 461–463 (RGD).

It belongs to the venom metalloproteinase (M12B) family. P-II subfamily. P-IId sub-subfamily. In terms of assembly, homodimer; disulfide-linked (disintegrin). The cofactor is Zn(2+). Expressed by the venom gland.

The protein localises to the secreted. Impairs hemostasis in the envenomed animal. This protein has not been identified in the venom. Its function is as follows. Inhibits ADP-induced platelet aggregation. Binds and inhibits integrins GPIIb/GPIIIa (ITGA2B/ITGB3), alpha-5/beta-1 (ITGA5/ITGB1), alpha-V/beta-3 (ITGAV/ITGB3), and alpha-V/beta-5 (ITGAV/ITGB5). It blocks cancer cell adhesion (tested on human breast cancer cell line MDA-MB-435) to fibronectin and vitronectin and thus prevents invasion of cancer cells. The chain is Zinc metalloproteinase/disintegrin from Agkistrodon contortrix contortrix (Southern copperhead).